The sequence spans 208 residues: Large ribosomal subunit protein bL25 (208 aa).

This sequence belongs to the bacterial ribosomal protein bL25 family. CTC subfamily. Part of the 50S ribosomal subunit; part of the 5S rRNA/L5/L18/L25 subcomplex. Contacts the 5S rRNA. Binds to the 5S rRNA independently of L5 and L18.

In terms of biological role, this is one of the proteins that binds to the 5S RNA in the ribosome where it forms part of the central protuberance. The sequence is that of Large ribosomal subunit protein bL25 from Acidovorax ebreus (strain TPSY) (Diaphorobacter sp. (strain TPSY)).